The sequence spans 469 residues: 3-isopropylmalate dehydratase large subunit (469 aa).

Residues cysteine 347, cysteine 410, and cysteine 413 each coordinate [4Fe-4S] cluster.

The protein belongs to the aconitase/IPM isomerase family. LeuC type 1 subfamily. In terms of assembly, heterodimer of LeuC and LeuD. It depends on [4Fe-4S] cluster as a cofactor.

It catalyses the reaction (2R,3S)-3-isopropylmalate = (2S)-2-isopropylmalate. The protein operates within amino-acid biosynthesis; L-leucine biosynthesis; L-leucine from 3-methyl-2-oxobutanoate: step 2/4. Functionally, catalyzes the isomerization between 2-isopropylmalate and 3-isopropylmalate, via the formation of 2-isopropylmaleate. The chain is 3-isopropylmalate dehydratase large subunit from Burkholderia lata (strain ATCC 17760 / DSM 23089 / LMG 22485 / NCIMB 9086 / R18194 / 383).